The primary structure comprises 272 residues: Shikimate dehydrogenase (NADP(+)) (272 aa).

Shikimate-binding positions include 14–16 (SKS) and threonine 61. Lysine 65 serves as the catalytic Proton acceptor. Position 77 (glutamate 77) interacts with NADP(+). Residues asparagine 86 and aspartate 102 each coordinate shikimate. Residues 126–130 (GAGGA), 149–154 (NRTVSR), and methionine 213 each bind NADP(+). Tyrosine 215 contributes to the shikimate binding site. Glycine 237 contributes to the NADP(+) binding site.

The protein belongs to the shikimate dehydrogenase family. Homodimer.

It catalyses the reaction shikimate + NADP(+) = 3-dehydroshikimate + NADPH + H(+). The protein operates within metabolic intermediate biosynthesis; chorismate biosynthesis; chorismate from D-erythrose 4-phosphate and phosphoenolpyruvate: step 4/7. Its function is as follows. Involved in the biosynthesis of the chorismate, which leads to the biosynthesis of aromatic amino acids. Catalyzes the reversible NADPH linked reduction of 3-dehydroshikimate (DHSA) to yield shikimate (SA). This chain is Shikimate dehydrogenase (NADP(+)), found in Escherichia coli (strain K12 / MC4100 / BW2952).